The sequence spans 509 residues: MNEQQRLASQQANSSTKKEEKDYSKYFENVYQPPSLKDAKKRGKEEVKIERDFGLPEEFRNFGTGRKFYIRTYGCQMNEHDTEVMAGIFTALGYEPTFSTEDADVVLLNTCAIRENAENKVFGELGHLKSLKRRNPDLLIGVCGCMSQEESVVNKIMQKNQHVDMVFGTHNIHRLPYILKDAMFSKETVVEVWSKEGDVIENLPKVRRGDIKAWVNIMYGCDKFCTYCIVPYTRGKERSRRPEDIIQEIRHLAANGYKEITLLGQNVNAYGKDFEDIEYGLGDLMDELRKVDIARIRFTTSHPRDFDDHLIEVLGKGGNLVEHIHLPVQSGSTDMLKIMARKYSREHYLELVRKIKEAIPDVVLTTDIIVGFPNETDEQFEETMSLYREVGFDTAFTFIYSPREGTPAAKMKDNVPMEVKKERLQRLNTLVNTLAIEKNSRYKGQIVEVLVDGESKNNPEVLAGYTRTNKLVNFVASKSLIGQLVKVKITEAKTWSLNGELVEEPIEVK.

Polar residues predominate over residues 1–15; it reads MNEQQRLASQQANSS. The segment at 1–25 is disordered; that stretch reads MNEQQRLASQQANSSTKKEEKDYSK. Residues 16–25 show a composition bias toward basic and acidic residues; that stretch reads TKKEEKDYSK. The MTTase N-terminal domain occupies 66 to 184; the sequence is RKFYIRTYGC…LPYILKDAMF (119 aa). Cys-75, Cys-111, Cys-145, Cys-221, Cys-225, and Cys-228 together coordinate [4Fe-4S] cluster. The Radical SAM core domain maps to 207–437; that stretch reads RRGDIKAWVN…NTLVNTLAIE (231 aa). Residues 440-503 form the TRAM domain; it reads SRYKGQIVEV…TWSLNGELVE (64 aa).

It belongs to the methylthiotransferase family. MiaB subfamily. In terms of assembly, monomer. [4Fe-4S] cluster is required as a cofactor.

It localises to the cytoplasm. The catalysed reaction is N(6)-dimethylallyladenosine(37) in tRNA + (sulfur carrier)-SH + AH2 + 2 S-adenosyl-L-methionine = 2-methylsulfanyl-N(6)-dimethylallyladenosine(37) in tRNA + (sulfur carrier)-H + 5'-deoxyadenosine + L-methionine + A + S-adenosyl-L-homocysteine + 2 H(+). In terms of biological role, catalyzes the methylthiolation of N6-(dimethylallyl)adenosine (i(6)A), leading to the formation of 2-methylthio-N6-(dimethylallyl)adenosine (ms(2)i(6)A) at position 37 in tRNAs that read codons beginning with uridine. In Bacillus cereus (strain B4264), this protein is tRNA-2-methylthio-N(6)-dimethylallyladenosine synthase.